A 350-amino-acid chain; its full sequence is Methionine import ATP-binding protein MetN (350 aa).

The region spanning 2–241 (IQIKNLKKEY…PQAPVTRSFV (240 aa)) is the ABC transporter domain. 38 to 45 (GHSGAGKS) provides a ligand contact to ATP.

The protein belongs to the ABC transporter superfamily. Methionine importer (TC 3.A.1.24) family. As to quaternary structure, the complex is composed of two ATP-binding proteins (MetN), two transmembrane proteins (MetI) and a solute-binding protein (MetQ).

It is found in the cell inner membrane. The enzyme catalyses L-methionine(out) + ATP + H2O = L-methionine(in) + ADP + phosphate + H(+). The catalysed reaction is D-methionine(out) + ATP + H2O = D-methionine(in) + ADP + phosphate + H(+). Part of the ABC transporter complex MetNIQ involved in methionine import. Responsible for energy coupling to the transport system. This chain is Methionine import ATP-binding protein MetN, found in Francisella tularensis subsp. holarctica (strain LVS).